A 501-amino-acid polypeptide reads, in one-letter code: Probable cytosol aminopeptidase (501 aa).

Residues Lys267 and Asp272 each coordinate Mn(2+). Residue Lys279 is part of the active site. Residues Asp290, Asp349, and Glu351 each coordinate Mn(2+). Arg353 is an active-site residue.

The protein belongs to the peptidase M17 family. Requires Mn(2+) as cofactor.

The protein localises to the cytoplasm. It carries out the reaction Release of an N-terminal amino acid, Xaa-|-Yaa-, in which Xaa is preferably Leu, but may be other amino acids including Pro although not Arg or Lys, and Yaa may be Pro. Amino acid amides and methyl esters are also readily hydrolyzed, but rates on arylamides are exceedingly low.. It catalyses the reaction Release of an N-terminal amino acid, preferentially leucine, but not glutamic or aspartic acids.. Presumably involved in the processing and regular turnover of intracellular proteins. Catalyzes the removal of unsubstituted N-terminal amino acids from various peptides. The protein is Probable cytosol aminopeptidase of Desulfovibrio desulfuricans (strain ATCC 27774 / DSM 6949 / MB).